Consider the following 375-residue polypeptide: Putative F-box protein At1g12190 (375 aa).

Residues 1 to 46 (MACVKFPWELMEEILYRVPSLSLSRFKTVSKEWNTLLNDKTFIKKH) form the F-box domain.

The polypeptide is Putative F-box protein At1g12190 (Arabidopsis thaliana (Mouse-ear cress)).